A 955-amino-acid polypeptide reads, in one-letter code: B3 domain-containing protein Os07g0563300 (955 aa).

2 stretches are compositionally biased toward pro residues: residues 1–20 and 29–45; these read MSSP…PPPS and VQPP…PQQP. 2 disordered regions span residues 1–81 and 325–392; these read MSSP…QRPR and ARKG…SSSL. The span at 62 to 71 shows a compositional bias: low complexity; sequence QHQQQQQGPP. Residues 332–342 show a composition bias toward polar residues; sequence DPCSSVSTTFK. A compositionally biased stretch (basic and acidic residues) spans 343–355; it reads LDSHHPSILKDDP. Low complexity predominate over residues 382-392; sequence QQQQQMASSSL. Residues 453-554 constitute a DNA-binding region (TF-B3); it reads FEKMLSASDA…KLVMGFRKAT (102 aa). Composition is skewed to polar residues over residues 556–565 and 598–608; these read LSAEQDQPTK and NTESKSSSPVE. Residues 556–642 form a disordered region; the sequence is LSAEQDQPTK…PLPVKRKATS (87 aa). The CW-type zinc-finger motif lies at 708-758; that stretch reads SGENHQWAQCEDCSKWRKLPVDALLPSKWTCSDNKWDSERSSCDSAQEINM. Positions 717, 720, 738, and 750 each coordinate Zn(2+). A disordered region spans residues 856-955; the sequence is MMRREKRQQS…ATRLLRDNPT (100 aa). Basic and acidic residues predominate over residues 862-877; the sequence is RQQSEKDSGVPRKREP. 2 stretches are compositionally biased toward polar residues: residues 878 to 900 and 920 to 933; these read GQSS…SSPH and TSSP…LNSQ. The span at 939–955 shows a compositional bias: basic and acidic residues; it reads EQSPKSDATRLLRDNPT.

The protein localises to the nucleus. The sequence is that of B3 domain-containing protein Os07g0563300 from Oryza sativa subsp. japonica (Rice).